The following is a 1516-amino-acid chain: Lysine-specific demethylase 5C (1516 aa).

Residues 14–55 enclose the JmjN domain; the sequence is CPVFEPSWAEFRDPLGYIAKIRPIAEKSGICKIRPPADWQPP. Residues 24–128 enclose the ARID domain; sequence FRDPLGYIAK…IVYPYEMYQS (105 aa). Over residues 142-151 the composition is skewed to basic and acidic residues; it reads NEEKDKEYKP. A disordered region spans residues 142–186; it reads NEEKDKEYKPHSIPLRQSVQPSKFNSYGRRAKRLQPDPEPTEEDI. A compositionally biased stretch (polar residues) spans 156-166; sequence LRQSVQPSKFN. Glycyl lysine isopeptide (Lys-Gly) (interchain with G-Cter in SUMO2) cross-links involve residues lysine 164, lysine 188, lysine 203, and lysine 233. The disordered stretch occupies residues 216-262; that stretch reads LRKKDKEGPECPPTVVVKEESGGDVKVESTSPKTFLESKEELSHSPE. Over residues 232–242 the composition is skewed to basic and acidic residues; it reads VKEESGGDVKV. Serine 246 is subject to Phosphoserine. A Glycyl lysine isopeptide (Lys-Gly) (interchain with G-Cter in SUMO2) cross-link involves residue lysine 254. Residues serine 260 and serine 276 each carry the phosphoserine modification. The segment at 283–333 adopts a PHD-type 1 zinc-finger fold; sequence SYVCRMCSRGDEDDKLLLCDGCDDNYHIFCLLPPLPEIPKGVWRCPKCVMA. Tyrosine 399 contributes to the 2-oxoglutarate binding site. The JmjC domain occupies 427 to 593; it reads EYATSGWNLN…AGRQCIEHYR (167 aa). Residues histidine 473 and glutamate 475 each coordinate Fe cation. 2-oxoglutarate is bound by residues serine 481, asparagine 483, and lysine 491. Histidine 561 contacts Fe cation. A C5HC2 zinc finger spans residues 666-718; that stretch reads CIKCKTTCFLSALACYDCPDGLVCLSHINDLCKCSSSRQYLRYRYTLDELPAM. Residues serine 852 and serine 856 each carry the phosphoserine modification. Residue lysine 1086 forms a Glycyl lysine isopeptide (Lys-Gly) (interchain with G-Cter in SUMO2) linkage. The PHD-type 2 zinc finger occupies 1144–1209; that stretch reads TSICVCGQVP…KFLCPLCMRS (66 aa). Positions 1274 to 1305 are disordered; it reads LQAEPRPEEPPTYPSTPAFDPLREGSGKDMPK. The segment covering 1294–1304 has biased composition (basic and acidic residues); sequence PLREGSGKDMP. The residue at position 1318 (serine 1318) is a Phosphoserine. Residues 1400–1516 form a disordered region; that stretch reads ERHGSRARGR…CPQQPPQQQL (117 aa). Over residues 1404–1419 the composition is skewed to basic residues; it reads SRARGRALERRRRRKV. A compositionally biased stretch (basic and acidic residues) spans 1420–1437; it reads DRGGEGDDPAREELEPKR. Positions 1444 to 1459 are enriched in acidic residues; that stretch reads EAEEAHEEEELEEETG. Composition is skewed to polar residues over residues 1471–1481 and 1489–1500; these read GSPSTQENQNG and SSGSSVPFSTLT.

This sequence belongs to the JARID1 histone demethylase family. In terms of assembly, part of two distinct complexes, one containing E2F6, and the other containing REST. Interacts with ZMYND8. Fe(2+) is required as a cofactor.

It localises to the nucleus. The catalysed reaction is N(6),N(6),N(6)-trimethyl-L-lysyl(4)-[histone H3] + 3 2-oxoglutarate + 3 O2 = L-lysyl(4)-[histone H3] + 3 formaldehyde + 3 succinate + 3 CO2. Its function is as follows. Histone demethylase that specifically demethylates 'Lys-4' of histone H3, thereby playing a central role in histone code. Does not demethylate histone H3 'Lys-9', H3 'Lys-27', H3 'Lys-36', H3 'Lys-79' or H4 'Lys-20'. Demethylates trimethylated and dimethylated but not monomethylated H3 'Lys-4'. Participates in transcriptional repression of neuronal genes by recruiting histone deacetylases and REST at neuron-restrictive silencer elements. The protein is Lysine-specific demethylase 5C (KDM5C) of Sus scrofa (Pig).